Here is an 814-residue protein sequence, read N- to C-terminus: MEDGFSSYSSLYDTSSLLQFCNDDSASAASSMEISDRIASLEQRVQMQEDDIQLLKSALADVVRRLNITEEQQAVLNRKGPTKARPLGQTLPLRTTVNNGTVLPKKPSASLPSPSGSRKEMVVPVTKSINRTSSSERVSPGGRRESSGDSKGSRNRTGSTSSSSSGKKNSESKPKEPTFSPEEGYVKMFLRGRPVTMYMPKDQVDSYSLEAKAELPTKRLKLEWVYGYRGRDCRNNLYLLPTGETVYFIASVVVLYNVEEQLQRHYAGHNDDVKCLAVHPDRITIATGQVAGTSKDGKQLPPHVRIWDSVTLNTLHVIGIGFFDRAVTCIAFSKSNGGSHLCAVDDSNDHVLSVWDWQREERLADVKCSNEAVFAADFHPTDTNIIVTCGKSHLYFWTLEGNSLNKKQGLFEKQEKPKFVLCVTFSENGDTITGDSSGNILVWGKGTNRISYAVQGAHEGGIFALCMLRDGTLVSGGGKDRRLISWNGNYQKLHKAEIPEQFGPIRTVAEGKGNVILIGTTRNFVLQGTLTGDFTPITQGHTDELWGLAIHASKPQFLTCGHDKHATLWDAVGHRPVWDKIIEDPAQSSGFHPSGSVVAVGTLTGRWFVFDTETKDLVTVHTDGNEQLSVMRYSPDGNFLAIGSHDNCIYIYGVSDNGRKYTRVGKCSGHSSFITHLDWSVNSQFLVSNSGDYEILYWVPSACKQVVSVETTRDIEWATYTCTLGFHVFGVWPEGSDGTDINAVCRAHEKKLLSTGDDFGKVHLFSYPCSQFRAPSHIYSGHSSHVTNVDFLCEDSHLISTGGKDTSIMQWRVI.

Positions 31–72 (SMEISDRIASLEQRVQMQEDDIQLLKSALADVVRRLNITEEQ) form a coiled coil. Residues 77–185 (NRKGPTKARP…EPTFSPEEGY (109 aa)) are disordered. Residues 92 to 101 (PLRTTVNNGT) are compositionally biased toward polar residues. Residues 103-115 (LPKKPSASLPSPS) are compositionally biased toward low complexity. At Ser113 the chain carries Phosphoserine. The segment covering 127 to 137 (KSINRTSSSER) has biased composition (polar residues). Over residues 142 to 152 (GRRESSGDSKG) the composition is skewed to basic and acidic residues. Positions 155–167 (NRTGSTSSSSSGK) are enriched in low complexity. The tract at residues 175–814 (KEPTFSPEEG…DTSIMQWRVI (640 aa)) is tandem atypical propeller in EMLs. WD repeat units lie at residues 260-309 (EQLQ…IWDS), 314-357 (TLHV…VWDW), 362-399 (RLAD…FWTL), 408-445 (QGLF…VWGK), 449-488 (RISY…SWNG), 492-529 (KLHK…LQGT), 534-571 (FTPI…LWDA), 577-612 (VWDK…VFDT), 616-654 (DLVT…IYGV), 663-700 (RVGK…YWVP), 708-767 (SVET…LFSY), and 774-813 (APSH…QWRV).

Belongs to the WD repeat EMAP family. As to quaternary structure, homotrimer; self-association is mediated by the N-terminal coiled coil. Does not interact with EML3. Binds repolymerizing microtubules. Binds unpolymerized tubulins via its WD repeat region. Interacts with TASOR.

Its subcellular location is the cytoplasm. The protein localises to the perinuclear region. The protein resides in the cytoskeleton. In terms of biological role, modulates the assembly and organization of the microtubule cytoskeleton, and probably plays a role in regulating the orientation of the mitotic spindle and the orientation of the plane of cell division. Required for normal proliferation of neuronal progenitor cells in the developing brain and for normal brain development. Does not affect neuron migration per se. The polypeptide is Echinoderm microtubule-associated protein-like 1 (Eml1) (Rattus norvegicus (Rat)).